The primary structure comprises 345 residues: Protein RecA (345 aa).

81–88 (GPESSGKT) provides a ligand contact to ATP.

This sequence belongs to the RecA family.

Its subcellular location is the cytoplasm. Can catalyze the hydrolysis of ATP in the presence of single-stranded DNA, the ATP-dependent uptake of single-stranded DNA by duplex DNA, and the ATP-dependent hybridization of homologous single-stranded DNAs. It interacts with LexA causing its activation and leading to its autocatalytic cleavage. The polypeptide is Protein RecA (Mycoplasma mycoides).